The chain runs to 1221 residues: Fibulin-2 (1221 aa).

Positions 1–26 (MLLQESAGVWLALALVTALTPSPSMA) are cleaved as a signal peptide. The segment at 27–176 (VPWQDCTGAE…ELICYQLPGC (150 aa)) is subdomain NA (Cys-rich). The interval 27-434 (VPWQDCTGAE…DGSTKDLIET (408 aa)) is n. Residues 177–434 (HGNFSDAEEG…DGSTKDLIET (258 aa)) form a subdomain NB (Cys-free) region. N179 carries N-linked (GlcNAc...) asparagine glycosylation. Disordered regions lie at residues 248–329 (PTAA…LIPD) and 341–399 (GAAP…PQHP). The segment covering 270–283 (DTEEDEEEEEEETL) has biased composition (acidic residues). Residues 312 to 322 (QEKEAEAKAGP) show a composition bias toward basic and acidic residues. A Cell attachment site motif is present at residues 421-423 (RGD). 11 cysteine pairs are disulfide-bonded: C435–C462, C436–C469, C449–C470, C479–C508, C492–C509, C511–C535, C512–C542, C525–C543, C598–C610, C606–C619, and C621–C634. Anaphylatoxin-like domains lie at 435–477 (CCAA…LKEK), 478–510 (SCVA…QCCD), and 511–543 (CCGL…LSCC). A glycan (N-linked (GlcNAc...) asparagine) is linked at N497. Positions 594–635 (DQDECLMLPGELCQHLCINTVGSYRCACFPGFELQGDGRTCR) constitute an EGF-like 1; calcium-binding domain. The interval 633–661 (TCRPDRGAPQLDTARESAPRSESAQVSPN) is disordered. Residues 652–661 (RSESAQVSPN) show a composition bias toward polar residues. Residues 669–708 (QPNTCKDNGPCRQVCRVVGDTAMCSCFPGYAIMADGVSCE) form the EGF-like 2 domain. Intrachain disulfides connect C673–C683, C679–C692, C694–C707, C713–C726, and C720–C735. The 47-residue stretch at 709–755 (DQDECLMGTHDCSWKQFCVNTLGSFYCVNHTVLCAEGYILNAHRKCV) folds into the EGF-like 3; calcium-binding domain. N-linked (GlcNAc...) asparagine glycosylation is present at N737. Cysteines 742 and 754 form a disulfide. Residues 756-800 (DINECVTDLHTCTRAEHCVNTPGSFQCYKALTCEPGYVLTDGECT) form the EGF-like 4; calcium-binding domain. Positions 801–846 (DVDECVTGTHNCQAGFSCQNTKGSFYCQARQRCMDGFLQDPEGNCV) constitute an EGF-like 5; calcium-binding domain. 3 disulfides stabilise this stretch: C805–C818, C812–C827, and C833–C845. Residues 847–894 (DINECTSLLEPCRSGFSCINTVGSYTCQRNPLVCGRGYHANEEGSECV) enclose the EGF-like 6; calcium-binding domain. The 43-residue stretch at 895-937 (DVNECETGVHRCGEGQLCYNLPGSYRCDCKPGFQRDAFGRTCI) folds into the EGF-like 7; calcium-binding domain. 15 disulfide bridges follow: C899–C912, C906–C921, C923–C936, C942–C954, C950–C963, C965–C978, C984–C993, C989–C1002, C1004–C1017, C1023–C1035, C1031–C1044, C1046–C1060, C1066–C1079, C1073–C1088, and C1093–C1105. In terms of domain architecture, EGF-like 8; calcium-binding spans 938–979 (DVNECWVSPGRLCQHTCENTPGSYRCSCAAGFLLAADGKHCE). The EGF-like 9; calcium-binding domain maps to 980-1018 (DVNECETRRCSQECANIYGSYQCYCRQGYQLAEDGHTCT). Positions 1019 to 1061 (DIDECAQGAGILCTFRCVNVPGSYQCACPEQGYTMMANGRSCK) constitute an EGF-like 10; calcium-binding domain. Residues 1062–1106 (DLDECALGTHNCSEAETCHNIQGSFRCLRFDCPPNYVRVSETKCE) form the EGF-like 11; calcium-binding domain. The N-linked (GlcNAc...) asparagine glycan is linked to N1072. Residues 1111–1221 (QDITECQTSP…MYIFFTTFAP (111 aa)) are domain III.

It belongs to the fibulin family. Homotrimer; disulfide-linked. Interacts with LAMA2. Interacts with FBN1 (via N-terminal domain). Forms a ternary complex with ELN and FBN1. As to expression, component of both basement membranes and other connective tissues.

The protein localises to the secreted. It localises to the extracellular space. Its subcellular location is the extracellular matrix. Its binding to fibronectin and some other ligands is calcium dependent. May act as an adapter that mediates the interaction between FBN1 and ELN. The chain is Fibulin-2 (Fbln2) from Mus musculus (Mouse).